A 357-amino-acid polypeptide reads, in one-letter code: Inner membrane protein YcfT (357 aa).

The Cytoplasmic segment spans residues 1 to 12 (MKQKELWINQIK). The chain crosses the membrane as a helical span at residues 13-33 (GLCICLVVIYHSVITFYPHLT). Topologically, residues 34–49 (TFQHPLSEVLSKCWIY) are periplasmic. A helical membrane pass occupies residues 50 to 70 (FNLYLAPFRMPVFFFISGYLI). The Cytoplasmic portion of the chain corresponds to 71 to 86 (RRYIDSVPWGNCLDKR). A helical transmembrane segment spans residues 87-107 (IWNIFWVLALWGVVQWLALSA). At 108-135 (LNQWLAPERDLSNASNAAYADSTGEFLH) the chain is on the periplasmic side. The helical transmembrane segment at 136-156 (GMITASTSLWYLYALIVYFVV) threads the bilayer. The Cytoplasmic portion of the chain corresponds to 157-162 (CKIFSR). The chain crosses the membrane as a helical span at residues 163-183 (LALPLFALFVLLSVAVNFVPT). At 184–196 (PWWGMNSVIRNLP) the chain is on the periplasmic side. Residues 197 to 217 (YYSLGAWFGATIMTCVKEVPL) traverse the membrane as a helical segment. Residues 218 to 231 (RRHLLMASLLTVLA) are Cytoplasmic-facing. A helical transmembrane segment spans residues 232 to 252 (VGAWLFTISLLLSLVSIVVIM). At 253–310 (KLFYQYEQRFGMRSTSLLNVIGSNTIAIYTTHRILVEIFSLTLLAQMNAARWSPQVEL) the chain is on the periplasmic side. A helical membrane pass occupies residues 311–331 (TLLLVYPFVSLFICTVAGLLV). The Cytoplasmic segment spans residues 332–357 (RKLSQRAFSDLLFSPPSLPAAVSYSR).

Belongs to the acyltransferase 3 family.

It localises to the cell inner membrane. The sequence is that of Inner membrane protein YcfT (ycfT) from Escherichia coli (strain K12).